A 97-amino-acid polypeptide reads, in one-letter code: Large ribosomal subunit protein uL23 (97 aa).

Belongs to the universal ribosomal protein uL23 family. In terms of assembly, part of the 50S ribosomal subunit. Contacts protein L29, and trigger factor when it is bound to the ribosome.

In terms of biological role, one of the early assembly proteins it binds 23S rRNA. One of the proteins that surrounds the polypeptide exit tunnel on the outside of the ribosome. Forms the main docking site for trigger factor binding to the ribosome. In Lactiplantibacillus plantarum (strain ATCC BAA-793 / NCIMB 8826 / WCFS1) (Lactobacillus plantarum), this protein is Large ribosomal subunit protein uL23.